Consider the following 404-residue polypeptide: MSEMSYLEKLLDGVEVEWLPLGEITKYEQPTKYLVKAKDYHDTYTIPVLTAGKTFILGYTNETHGIYQASKAPVIIFDDFTTANKWVDFDFKAKSSAMKMVTSCDDNKTLLKYVYYWLNTLPSEFAEGDHKRQWISNYSQKKIPIPCPDNPEKSLAIQSEIVRILDKFTALTAELTAELNMRKKQYNYYRDQLLSFKEGEVEWKTLGEIGKWYGGGTPSKNKIEFWENGSIPWISPKDMGRTLVDSSEDYITEEAVLHSSTKLIPANSIAIVVRSSILDKVLPSALIKVPATLNQDMKAVIPHENILVKYIYHMIGSRGSDILRAAKKTGGSVASIDSKKLFSFKIPVPNINEQQRIVEILDKFDTLTNSITEGLPREIELRQKQYEYYRDLLFSFPKPETVSN.

Residues 1–153 are target-recognition domain 1; that stretch reads MSEMSYLEKL…PIPCPDNPEK (153 aa). Residues 154–199 form a conserved region 1 region; the sequence is SLAIQSEIVRILDKFTALTAELTAELNMRKKQYNYYRDQLLSFKEG. The target-recognition domain 2 stretch occupies residues 200–349; it reads EVEWKTLGEI…KLFSFKIPVP (150 aa). The interval 350–404 is conserved region 2; the sequence is NINEQQRIVEILDKFDTLTNSITEGLPREIELRQKQYEYYRDLLFSFPKPETVSN.

The protein belongs to the type-I restriction system S methylase family. The type I restriction/modification system is composed of three polypeptides R, M and S; the restriction enzyme has stoichiometry R(2)M(2)S(1) while the methyltransferase is M(2)S(1). There is an equilibrium between R(2)M(2)S(1) and R(1)M(2)S(1); the latter is methylation and translocation proficient but restriction deficient. As to quaternary structure, (Microbial infection) Holoenenzyme interacts with Escherichia phage T7 protein Ocr; this interaction leads to the inhibition of the restriction activity, but may still allow methylation and translocation.

Functionally, the specificity (S) subunit of a type I restriction enzyme; this subunit dictates DNA sequence specificity. The presence or absence of a 4-residue repeat changes the sequence specificity; a third copy of TAEL inserted at position 179-180 changes the recognition site from 5'-GAAN(6)RTCG-3' (for EcoR124I) to 5'-GAAN(7)RTCG-3' (for EcoR124II). The M and S subunits together form a methyltransferase (MTase) that methylates A-3 on the top and bottom strand of the sequence 5'-GAAN(7)RTCG-3'. In the presence of the R subunit the complex can also act as an endonuclease, binding to the same target sequence but cutting the DNA some distance from this site. Whether the DNA is cut or modified depends on the methylation state of the target sequence. When the target site is unmodified, the DNA is cut. When the target site is hemimethylated, the complex acts as a maintenance MTase modifying the DNA so that both strands become methylated. After locating a non-methylated recognition site, the enzyme complex serves as a molecular motor that translocates DNA in an ATP-dependent manner until a collision occurs that triggers cleavage. The R(1)M(2)S(1) complex translocates an average of 555 bp/second on nicked DNA; the R(2)M(2)S(1) complex translocates at double that speed. The 2 R subunit motors are independent and track along the helical pitch of the DNA, inducing positive supercoiling ahead of themselves. In Escherichia coli, this protein is Type I restriction enzyme EcoR124I/EcoR124II specificity subunit (hsdS).